The chain runs to 609 residues: MSQAQINTLASLFDSAIAVLKNDGELPADWQNNSQITRTKDASHGDFASNIALTAAKAAKANPRQVAEKIVNALPENQDIRQIEIAGPGFINVFLNTEAKFAVLDDIFNLQAGFGLSKQFDGQKVQVEFVSANPTSSLHVGHGRGAAFGMSVSNLLEAIGYDVTREYYVNDAGRQMDILATSTYLRYLETNGEPVTFPVNGYQGDYVSDIAQTLKTQHADTYVHRFAEIAKDVPEDAQFEINADGEKVLLSGDKEAHIDGLIANSKALLGSGYELFLNAALSSILADIKDDLNDFGVSYECWFSERSIDSEIEPVLQILEDKGYLYEKDGNIWFKSTDFGDEKDRVVRRANGQSTYFASDIAYHKNKFDRGFDKVVNVWGADHHGYVPRVKAALLALGIDADRLDVVLVQFVALWRGDEKVQMSSRSGKFVTLRELRHEVGNDAARFYYVARKPEVHVDFDLELAKSQSKDNLVYYIQYAHARVCRVLEKLEASGLSVNDAMGAEQQELLVASSEEELIKLLAAYPATLLRSATGYEPHILTNYLKELAALFHGWYDSNRILPVSLTSGETPSADEMAMMQARLRLSKAVRLVISNGLGLLGLSAPSSM.

Residues 132 to 142 carry the 'HIGH' region motif; it reads ANPTSSLHVGH.

This sequence belongs to the class-I aminoacyl-tRNA synthetase family. In terms of assembly, monomer.

Its subcellular location is the cytoplasm. The catalysed reaction is tRNA(Arg) + L-arginine + ATP = L-arginyl-tRNA(Arg) + AMP + diphosphate. The sequence is that of Arginine--tRNA ligase from Psychrobacter arcticus (strain DSM 17307 / VKM B-2377 / 273-4).